The following is a 258-amino-acid chain: Indole-3-glycerol phosphate synthase (258 aa).

The protein belongs to the TrpC family.

The enzyme catalyses 1-(2-carboxyphenylamino)-1-deoxy-D-ribulose 5-phosphate + H(+) = (1S,2R)-1-C-(indol-3-yl)glycerol 3-phosphate + CO2 + H2O. It functions in the pathway amino-acid biosynthesis; L-tryptophan biosynthesis; L-tryptophan from chorismate: step 4/5. This chain is Indole-3-glycerol phosphate synthase, found in Exiguobacterium sibiricum (strain DSM 17290 / CCUG 55495 / CIP 109462 / JCM 13490 / 255-15).